Reading from the N-terminus, the 367-residue chain is UDP-N-acetylglucosamine--N-acetylmuramyl-(pentapeptide) pyrophosphoryl-undecaprenol N-acetylglucosamine transferase (367 aa).

UDP-N-acetyl-alpha-D-glucosamine is bound by residues 18 to 20 (TGG), N130, R170, S196, I252, 271 to 276 (ALTVSE), and Q297.

Belongs to the glycosyltransferase 28 family. MurG subfamily.

Its subcellular location is the cell inner membrane. The enzyme catalyses di-trans,octa-cis-undecaprenyl diphospho-N-acetyl-alpha-D-muramoyl-L-alanyl-D-glutamyl-meso-2,6-diaminopimeloyl-D-alanyl-D-alanine + UDP-N-acetyl-alpha-D-glucosamine = di-trans,octa-cis-undecaprenyl diphospho-[N-acetyl-alpha-D-glucosaminyl-(1-&gt;4)]-N-acetyl-alpha-D-muramoyl-L-alanyl-D-glutamyl-meso-2,6-diaminopimeloyl-D-alanyl-D-alanine + UDP + H(+). It participates in cell wall biogenesis; peptidoglycan biosynthesis. Functionally, cell wall formation. Catalyzes the transfer of a GlcNAc subunit on undecaprenyl-pyrophosphoryl-MurNAc-pentapeptide (lipid intermediate I) to form undecaprenyl-pyrophosphoryl-MurNAc-(pentapeptide)GlcNAc (lipid intermediate II). This Shewanella frigidimarina (strain NCIMB 400) protein is UDP-N-acetylglucosamine--N-acetylmuramyl-(pentapeptide) pyrophosphoryl-undecaprenol N-acetylglucosamine transferase.